The following is an 85-amino-acid chain: Small ribosomal subunit protein bS16 (85 aa).

It belongs to the bacterial ribosomal protein bS16 family.

The chain is Small ribosomal subunit protein bS16 from Xanthomonas oryzae pv. oryzae (strain PXO99A).